Consider the following 188-residue polypeptide: Molybdopterin synthase catalytic subunit (188 aa).

A compositionally biased stretch (polar residues) spans 1 to 10 (MSTSETSSYT). Residues 1–21 (MSTSETSSYTPDIPSEPVTKT) form a disordered region. Substrate contacts are provided by residues 123–124 (HR), Lys-139, and 146–148 (KLE).

It belongs to the MoaE family. MOCS2B subfamily. As to quaternary structure, heterotetramer; composed of 2 small (MOCS2A) and 2 large (MOCS2B) subunits.

The protein localises to the cytoplasm. It carries out the reaction 2 [molybdopterin-synthase sulfur-carrier protein]-C-terminal-Gly-aminoethanethioate + cyclic pyranopterin phosphate + H2O = molybdopterin + 2 [molybdopterin-synthase sulfur-carrier protein]-C-terminal Gly-Gly + 2 H(+). The protein operates within cofactor biosynthesis; molybdopterin biosynthesis. In terms of biological role, catalytic subunit of the molybdopterin synthase complex, a complex that catalyzes the conversion of precursor Z into molybdopterin. Acts by mediating the incorporation of 2 sulfur atoms from thiocarboxylated MOCS2A into precursor Z to generate a dithiolene group. The protein is Molybdopterin synthase catalytic subunit of Phaeosphaeria nodorum (strain SN15 / ATCC MYA-4574 / FGSC 10173) (Glume blotch fungus).